The following is a 277-amino-acid chain: Methyltransferase str3 (277 aa).

It belongs to the methyltransferase superfamily. LaeA methyltransferase family.

Its pathway is mycotoxin biosynthesis. In terms of biological role, methyltransferase; part of the gene cluster that mediates the biosynthesis of strobilurin A, an antifungal polyketide that contains a key beta-methoxyacrylate toxophore that targets the complex III of the mitochondrial electron transport chain. Strobilurin biosynthesis begins with construction of benzoyl CoA by step-wise elimination of ammonia from phenylalanine by the phenylalanine ammonia-lyase str11, oxygenation by str8 and retro-Claisen reaction to form benzoic acid, which is activated to its CoA thiolester benzoyl CoA by the dedicated CoA ligase str10. Benzoyl CoA forms the starter unit for the highly reducing polyketide synthase stpks1 that produces the polyketide prestrobilutin A. The FAD-dependent oxygenase str9 then catalyzes the key oxidative rearrangement responsible for the creation of the beta-methoxyacrylate toxophore. Str9 performs epoxidation of the 2,3 olefin of prestrobilutin A, followed by Meinwald rearrangement to furnish the aldehyde intermediate. Rapid enolization of the aldehyde intermediate would give the beta-methoxyacrylate skeleton and methylations catalyzed by str2 and str3 complete the synthesis and lead to the production of strobilurin A. The short-chain dehydrogenase stl2 and the dehydrogenase str4 play a role in the shunt pathway leading to the production of bolineol. The cluster encodes no obvious halogenase gene that could be involved in production of strobilurin B, nor any obvious dimethylallyl-transferase that could be involved in the production of strobilurin G. It is possible that unknown proteins encoded in, or near, the cluster (such as str1 or stl1) may form new classes of halogenases or dimethylally-transferases, or that the responsible genes are located elsewhere on the genome. Similarly, proteins encoded by str5/str6 hydrolases appear to have no chemical role in the biosynthesis of strobilurin A. Finally, no obvious self-resistance gene is found within the cluster. This is Methyltransferase str3 from Strobilurus tenacellus.